Here is a 110-residue protein sequence, read N- to C-terminus: Large ribosomal subunit protein uL22 (110 aa).

This sequence belongs to the universal ribosomal protein uL22 family. As to quaternary structure, part of the 50S ribosomal subunit.

In terms of biological role, this protein binds specifically to 23S rRNA; its binding is stimulated by other ribosomal proteins, e.g. L4, L17, and L20. It is important during the early stages of 50S assembly. It makes multiple contacts with different domains of the 23S rRNA in the assembled 50S subunit and ribosome. Functionally, the globular domain of the protein is located near the polypeptide exit tunnel on the outside of the subunit, while an extended beta-hairpin is found that lines the wall of the exit tunnel in the center of the 70S ribosome. This chain is Large ribosomal subunit protein uL22, found in Oleidesulfovibrio alaskensis (strain ATCC BAA-1058 / DSM 17464 / G20) (Desulfovibrio alaskensis).